The primary structure comprises 168 residues: Ribosome maturation factor RimM (168 aa).

Residues 94–167 (DGQYYYHQII…FVTVELMEGL (74 aa)) enclose the PRC barrel domain.

It belongs to the RimM family. In terms of assembly, binds ribosomal protein uS19.

It localises to the cytoplasm. Its function is as follows. An accessory protein needed during the final step in the assembly of 30S ribosomal subunit, possibly for assembly of the head region. Essential for efficient processing of 16S rRNA. May be needed both before and after RbfA during the maturation of 16S rRNA. It has affinity for free ribosomal 30S subunits but not for 70S ribosomes. The sequence is that of Ribosome maturation factor RimM from Limosilactobacillus reuteri (strain DSM 20016) (Lactobacillus reuteri).